Reading from the N-terminus, the 438-residue chain is POU domain, class 3, transcription factor 3-A (438 aa).

3 disordered regions span residues 22-43, 102-172, and 186-248; these read VHSE…SVSG, SPWS…QSQQ, and GMLN…PTSD. Polar residues-rich tracts occupy residues 103-123 and 146-159; these read PWSS…VKSS and QSHQ…TASH. Over residues 160–172 the composition is skewed to low complexity; it reads ISTITGGQQQSQQ. The segment covering 210-230 has biased composition (basic residues); it reads HHHHHHHQQQHPHHHHHHQHH. The 75-residue stretch at 242 to 316 folds into the POU-specific domain; the sequence is EDTPTSDDLE…LLNKWLEEAD (75 aa). Residues 334 to 393 constitute a DNA-binding region (homeobox); sequence KRKKRTSIEVSVKGALESHFLKCPKPSAQEITSLADNLQLEKEVVRVWFCNRRQKEKRMT.

Belongs to the POU transcription factor family. Class-3 subfamily. As to expression, predominantly expressed in the embryonic and adult central nervous system. In adults, isoform 2 is expressed in the brain, ovary, basal cells of the skin and muscle satellite cells.

The protein resides in the nucleus. Functionally, transcription factor that may play important roles in patterning the embryonic brain. This is POU domain, class 3, transcription factor 3-A (pou3f3a) from Danio rerio (Zebrafish).